The primary structure comprises 321 residues: 2,3,4,5-tetrahydropyridine-2,6-dicarboxylate N-succinyltransferase (321 aa).

Mg(2+)-binding residues include Asp-166 and Glu-183. Glu-199 serves as the catalytic Acyl-anhydride intermediate. Residues Arg-201, Gly-216, Ser-219, Ala-242, 257–258, Gly-265, Lys-281, and 294–297 contribute to the succinyl-CoA site; these read EA and RRNS.

It belongs to the type 2 tetrahydrodipicolinate N-succinyltransferase family. Homotrimer.

It localises to the cytoplasm. It catalyses the reaction (S)-2,3,4,5-tetrahydrodipicolinate + succinyl-CoA + H2O = (S)-2-succinylamino-6-oxoheptanedioate + CoA. The protein operates within amino-acid biosynthesis; L-lysine biosynthesis via DAP pathway; LL-2,6-diaminopimelate from (S)-tetrahydrodipicolinate (succinylase route): step 1/3. Catalyzes the conversion of the cyclic tetrahydrodipicolinate (THDP) into the acyclic N-succinyl-L-2-amino-6-oxopimelate using succinyl-CoA. This is 2,3,4,5-tetrahydropyridine-2,6-dicarboxylate N-succinyltransferase from Rothia mucilaginosa (strain DY-18) (Stomatococcus mucilaginosus).